We begin with the raw amino-acid sequence, 482 residues long: Cysteine--tRNA ligase (482 aa).

A Zn(2+)-binding site is contributed by Cys29. The short motif at 31–41 (PTVYDSAHVGH) is the 'HIGH' region element. The Zn(2+) site is built by Cys210, His235, and Glu239. Residues 272 to 276 (KMSKS) carry the 'KMSKS' region motif. Lys275 contributes to the ATP binding site.

This sequence belongs to the class-I aminoacyl-tRNA synthetase family. As to quaternary structure, monomer. Zn(2+) is required as a cofactor.

It localises to the cytoplasm. The enzyme catalyses tRNA(Cys) + L-cysteine + ATP = L-cysteinyl-tRNA(Cys) + AMP + diphosphate. This chain is Cysteine--tRNA ligase, found in Anaeromyxobacter sp. (strain Fw109-5).